Reading from the N-terminus, the 164-residue chain is Protein phosphatase 1 regulatory subunit 14C (164 aa).

The span at 1–19 (MSVVTGGGEAAGGTSGGGA) shows a compositional bias: gly residues. The disordered stretch occupies residues 1-72 (MSVVTGGGEA…QRRHQQGKVT (72 aa)). At S2 the chain carries N-acetylserine. At S25 the chain carries Phosphoserine. Position 27 is an omega-N-methylarginine (R27). S33 carries the phosphoserine modification. The span at 50-62 (VATVAAAGQVQQQ) shows a compositional bias: low complexity. Residue T72 is modified to Phosphothreonine; by ILK1.

This sequence belongs to the PP1 inhibitor family. Post-translationally, has over 600-fold higher inhibitory activity when phosphorylated, creating a molecular switch for regulating the phosphorylation status of PPP1CA substrates and smooth muscle contraction. The main inhibitory site appears to be Thr-72.

It is found in the endomembrane system. In terms of biological role, inhibitor of the PP1 regulatory subunit PPP1CA. This is Protein phosphatase 1 regulatory subunit 14C (Ppp1r14c) from Rattus norvegicus (Rat).